The chain runs to 264 residues: 3-methyl-2-oxobutanoate hydroxymethyltransferase (264 aa).

Positions 45 and 84 each coordinate Mg(2+). 3-methyl-2-oxobutanoate is bound by residues 45 to 46 (DS), D84, and K112. E114 lines the Mg(2+) pocket. The active-site Proton acceptor is the E181.

It belongs to the PanB family. In terms of assembly, homodecamer; pentamer of dimers. Mg(2+) is required as a cofactor.

The protein localises to the cytoplasm. The enzyme catalyses 3-methyl-2-oxobutanoate + (6R)-5,10-methylene-5,6,7,8-tetrahydrofolate + H2O = 2-dehydropantoate + (6S)-5,6,7,8-tetrahydrofolate. The protein operates within cofactor biosynthesis; (R)-pantothenate biosynthesis; (R)-pantoate from 3-methyl-2-oxobutanoate: step 1/2. Functionally, catalyzes the reversible reaction in which hydroxymethyl group from 5,10-methylenetetrahydrofolate is transferred onto alpha-ketoisovalerate to form ketopantoate. The polypeptide is 3-methyl-2-oxobutanoate hydroxymethyltransferase (Shewanella sp. (strain MR-7)).